We begin with the raw amino-acid sequence, 298 residues long: MAAITASMVAELRGKTDAPMMECKKALTEADGDMAKAEELLRVKLGTKAGKAASRVTAEGVVASFINGNVGALIEVNSETDFVSKNDSFIAMANAAAKLVAEHNPADIEALGQLAYEQDGFGPTLEDVRKGLIGKIGENMSFRRFKRFSGSNLAAYLHGSRIGVVVEFDGDAVAAKDVAMHVAAMKPVALTSADVPADLIAKERAVAEGKAAESGKPADIAAKMVEGSVQKYLKEVSLADQVFVKAADGKQTVAQMLKAANTTVKGFTLYVVGEGIEKKVDDFAAEVAAQVAAAKSGA.

The tract at residues 80-83 (TDFV) is involved in Mg(2+) ion dislocation from EF-Tu.

It belongs to the EF-Ts family.

The protein localises to the cytoplasm. Associates with the EF-Tu.GDP complex and induces the exchange of GDP to GTP. It remains bound to the aminoacyl-tRNA.EF-Tu.GTP complex up to the GTP hydrolysis stage on the ribosome. The chain is Elongation factor Ts from Acidovorax sp. (strain JS42).